Consider the following 403-residue polypeptide: S-adenosylmethionine synthase (403 aa).

Histidine 15 is an ATP binding site. Aspartate 17 contributes to the Mg(2+) binding site. Residue glutamate 43 participates in K(+) binding. L-methionine-binding residues include glutamate 56 and glutamine 99. Residues 99–109 (QSPHIAQGVDR) are flexible loop. ATP-binding positions include 166-168 (DAK), 232-233 (KF), aspartate 241, 247-248 (RK), alanine 264, and lysine 268. Residue aspartate 241 participates in L-methionine binding. Lysine 272 is a binding site for L-methionine.

Belongs to the AdoMet synthase family. In terms of assembly, homotetramer; dimer of dimers. Requires Mg(2+) as cofactor. K(+) is required as a cofactor.

The protein localises to the cytoplasm. The enzyme catalyses L-methionine + ATP + H2O = S-adenosyl-L-methionine + phosphate + diphosphate. It participates in amino-acid biosynthesis; S-adenosyl-L-methionine biosynthesis; S-adenosyl-L-methionine from L-methionine: step 1/1. Functionally, catalyzes the formation of S-adenosylmethionine (AdoMet) from methionine and ATP. The overall synthetic reaction is composed of two sequential steps, AdoMet formation and the subsequent tripolyphosphate hydrolysis which occurs prior to release of AdoMet from the enzyme. The polypeptide is S-adenosylmethionine synthase (Stenotrophomonas maltophilia (strain K279a)).